The following is a 396-amino-acid chain: Purine ribonucleoside efflux pump NepI (396 aa).

At 1–21 (MSEFIAENRGADAITRPNWSA) the chain is on the cytoplasmic side. A helical transmembrane segment spans residues 22-42 (VFSVAFCVACLIIVEFLPVSL). Residues 43–54 (LTPMAQDLGISE) lie on the Periplasmic side of the membrane. Residues 55-75 (GVAGQSVTVTAFVAMFASLFI) form a helical membrane-spanning segment. At 76 to 85 (TQTIQATDRR) the chain is on the cytoplasmic side. A helical membrane pass occupies residues 86-106 (YVVILFAVLLTLSCLLVSFAN). Position 107 (Ser107) is a topological domain, periplasmic. A helical transmembrane segment spans residues 108–128 (FSLLLIGRACLGLALGGFWAI). At 129-147 (SASLTMRLVPPRTVPKALS) the chain is on the cytoplasmic side. Residues 148–168 (VIFGAVSIALVIAAPLGGFLG) form a helical membrane-spanning segment. Over 169–175 (ELIGWRN) the chain is Periplasmic. The chain crosses the membrane as a helical span at residues 176–196 (VFNAAAAMGVLCIFWIIKSLP). Residues 197–215 (SLPGEPSHQKQNTFRLLQR) are Cytoplasmic-facing. A helical transmembrane segment spans residues 216-236 (PGVMAGMIAIFMSFAGQFAFF). The Periplasmic portion of the chain corresponds to 237–255 (TYIRPVYMNLAGFGVDGLT). Residues 256-276 (LVLLSFGIASFVGTSLSSFIL) traverse the membrane as a helical segment. The Cytoplasmic segment spans residues 277-281 (KRSVK). A helical transmembrane segment spans residues 282-302 (LALAGAPFVLALSALVLTLWG). Over 303 to 305 (SDK) the chain is Periplasmic. A helical membrane pass occupies residues 306-326 (IVATGVAIIWGLTFALIPVGW). Topologically, residues 327–343 (STWITRSLADQAEKAGS) are cytoplasmic. Residues 344–364 (IQVAVIQLANTCGAAIGGYAL) traverse the membrane as a helical segment. Residues 365–366 (DN) are Periplasmic-facing. A helical membrane pass occupies residues 367–387 (IGLTSPLMLSGTLMLLTALLV). Residues 388 to 396 (TAKVKMKKS) are Cytoplasmic-facing.

This sequence belongs to the major facilitator superfamily. DHA1 family. NepI (TC 2.A.1.2.26) subfamily.

Its subcellular location is the cell inner membrane. The catalysed reaction is inosine(in) + H(+)(out) = inosine(out) + H(+)(in). It carries out the reaction guanosine(in) + H(+)(out) = guanosine(out) + H(+)(in). Involved in the efflux of purine ribonucleosides, such as inosine and guanosine. The chain is Purine ribonucleoside efflux pump NepI from Escherichia coli O127:H6 (strain E2348/69 / EPEC).